Reading from the N-terminus, the 428-residue chain is Trigger factor (428 aa).

Residues 163 to 248 (GDTAVIDFEG…VHEVKAKQLP (86 aa)) enclose the PPIase FKBP-type domain.

It belongs to the FKBP-type PPIase family. Tig subfamily.

The protein localises to the cytoplasm. The enzyme catalyses [protein]-peptidylproline (omega=180) = [protein]-peptidylproline (omega=0). In terms of biological role, involved in protein export. Acts as a chaperone by maintaining the newly synthesized protein in an open conformation. Functions as a peptidyl-prolyl cis-trans isomerase. In Geobacillus thermodenitrificans (strain NG80-2), this protein is Trigger factor.